The following is a 25-amino-acid chain: Chrysophsin-2 (25 aa).

A Histidine amide modification is found at His-25.

In terms of tissue distribution, gill.

Its subcellular location is the secreted. Has antibacterial activity against Gram-positive bacteria B.subtilis ATCC 6633, L.garvieae ATCC 49156 and S.iniae F-8502, and Gram-negative bacteria E.coli WT-2, V.anguillarum ATCC 19264, V.penaeicida KHA, V.harveyi ATCC 14126, V.vulnificus ATCC 33148 and A.salmonicida NCMB 1102. Has hemolytic activity against human red blood cells. Seems to disrupt the membranes by adopting an alpha helical conformation. May play a significant role in innate host defense. In Pagrus major (Red sea bream), this protein is Chrysophsin-2.